The following is a 541-amino-acid chain: Atlastin-3 (541 aa).

A disordered region spans residues 1–22; the sequence is MLSPQRTAAVASRGAGDAMENG. Residues 1–25 form an N-terminal hypervariable region (HVR) region; the sequence is MLSPQRTAAVASRGAGDAMENGKPG. Residues 1 to 445 lie on the Cytoplasmic side of the membrane; it reads MLSPQRTAAV…NVFSTFRTPA (445 aa). The 250-residue stretch at 57–306 folds into the GB1/RHD3-type G domain; it reads DLDVVVVSVA…LIPYVLNPSK (250 aa). GDP is bound by residues R70, K71, G72, K73, S74, F75, and R109. Position 142 (D142) interacts with Mg(2+). The GDP site is built by R213, D214, V272, and S275. The 3HB (three-helix bundle) domain stretch occupies residues 344 to 434; that stretch reads MLQATAANNL…YENFCKHNGS (91 aa). K391 is modified (N6-acetyllysine). Residues 446-466 form a helical membrane-spanning segment; sequence VLFTGIAVLYIASGLTGFIGL. A topological domain (lumenal) is located at residue E467. A helical membrane pass occupies residues 468 to 488; it reads VVAQLFNCMVGLLLIALLTWG. The Cytoplasmic segment spans residues 489-541; the sequence is YIRYSGQYLELGGAIDSGAAYVLEQASSHIGNSTQAAVRDAIAGRPPADKKSQ.

Belongs to the TRAFAC class dynamin-like GTPase superfamily. GB1/RHD3 GTPase family. GB1 subfamily. In terms of assembly, monomeric and homodimeric. The homodimer, transiently formed by two molecules on opposing membranes, is the active form mediating ER membrane fusion. Interacts with ZFYVE27; both proteins are involved in endoplasmic reticulum tubular network organization. Interacts with REEP5; both proteins are involved in endoplasmic reticulum tubular network organization.

The protein resides in the endoplasmic reticulum membrane. It catalyses the reaction GTP + H2O = GDP + phosphate + H(+). Atlastin-3 (ATL3) is a membrane-anchored GTPase that mediates the GTP-dependent fusion of endoplasmic reticulum (ER) membranes, maintaining the continuous ER network. It facilitates the formation of three-way junctions where ER tubules intersect. Two atlastin-3 on neighboring ER tubules bind GTP and form loose homodimers through the GB1/RHD3-type G domains and 3HB regions. Upon GTP hydrolysis, the 3HB regions tighten, pulling the membranes together to drive their fusion. After fusion, the homodimer disassembles upon release of inorganic phosphate (Pi). Subsequently, GDP dissociates, resetting the monomers to a conformation ready for a new fusion cycle. This Rattus norvegicus (Rat) protein is Atlastin-3.